The chain runs to 341 residues: Paired box protein Pax-9 (341 aa).

Positions 4-130 (AFGEVNQLGG…SSISRILRNK (127 aa)) form a DNA-binding region, paired. Positions 7–63 (EVNQLGGVFVNGRPLPNAIRLRIVELAQLGIRPCDISRQLRVSHGCVSKILARYNET) are PAI subdomain. Residues 82–130 (TVVKHIRTYKQRDPGIFAWEIRDRLLADGVCDKYNVPSVSSISRILRNK) form an RED subdomain region. The segment at 168–189 (AAAAKVPTPPGVPAIPGSVAMP) is interaction with KDM5B.

As to quaternary structure, interacts with KDM5B.

It is found in the nucleus. Transcription factor required for normal development of thymus, parathyroid glands, ultimobranchial bodies, teeth, skeletal elements of skull and larynx as well as distal limbs. This Leontopithecus rosalia (Golden lion tamarin) protein is Paired box protein Pax-9 (PAX9).